The primary structure comprises 107 residues: UPF0145 protein BH1111 (107 aa).

It belongs to the UPF0145 family.

This Halalkalibacterium halodurans (strain ATCC BAA-125 / DSM 18197 / FERM 7344 / JCM 9153 / C-125) (Bacillus halodurans) protein is UPF0145 protein BH1111.